The primary structure comprises 117 residues: Venom nerve growth factor (117 aa).

3 cysteine pairs are disulfide-bonded: Cys-12-Cys-77, Cys-55-Cys-105, and Cys-65-Cys-107. A glycan (N-linked (GlcNAc...) asparagine) is linked at Asn-21.

This sequence belongs to the NGF-beta family. Homodimer; non-covalently linked. In terms of tissue distribution, expressed by the venom gland.

The protein resides in the secreted. Functionally, nerve growth factor is important for the development and maintenance of the sympathetic and sensory nervous systems. It stimulates division and differentiation of sympathetic and embryonic sensory neurons as well as basal forebrain cholinergic neurons in the brain. Its relevance in the snake venom is not clear. However, it has been shown to inhibit metalloproteinase-dependent proteolysis of platelet glycoprotein Ib alpha, suggesting a metalloproteinase inhibition to prevent metalloprotease autodigestion and/or protection against prey proteases. Binds a lipid between the two protein chains in the homodimer. The lipid-bound form promotes histamine relase from mouse mast cells, contrary to the lipid-free form. In Daboia russelii (Russel's viper), this protein is Venom nerve growth factor.